Here is a 150-residue protein sequence, read N- to C-terminus: Large ribosomal subunit protein uL15 (150 aa).

Residues 1–52 (MDLSNLKPAEGSVRKNSKRIGRGEGSGKGGTATRGHKGAKSRSGYSKKIGFE) are disordered. The segment covering 23-32 (GEGSGKGGTA) has biased composition (gly residues).

It belongs to the universal ribosomal protein uL15 family. Part of the 50S ribosomal subunit.

Functionally, binds to the 23S rRNA. The protein is Large ribosomal subunit protein uL15 of Christiangramia forsetii (strain DSM 17595 / CGMCC 1.15422 / KT0803) (Gramella forsetii).